The chain runs to 512 residues: Sodium/proline symporter (512 aa).

13 consecutive transmembrane segments (helical) span residues 16 to 36 (WQTY…GFYG), 54 to 74 (IGPY…WMIM), 85 to 105 (LSAM…YFVV), 139 to 159 (IISG…GFVS), 174 to 194 (FGLI…GYLA), 200 to 220 (FFQG…AMMN), 240 to 260 (LFKG…LGYF), 286 to 306 (ISWM…GIAF), 327 to 347 (VLFH…AIMS), 381 to 401 (FVMI…AIAW), 410 to 430 (LVGN…LFAL), 438 to 458 (AGAV…IAWI), and 467 to 487 (IFGL…TYVV).

The protein belongs to the sodium:solute symporter (SSF) (TC 2.A.21) family.

The protein localises to the cell membrane. It carries out the reaction L-proline(in) + Na(+)(in) = L-proline(out) + Na(+)(out). In terms of biological role, catalyzes the sodium-dependent uptake of extracellular L-proline. Since most S.aureus strains are L-proline auxotrophs, this transporter may aid the bacterial persistence during an infection of tissues with low proline concentrations. This chain is Sodium/proline symporter (putP), found in Staphylococcus aureus (strain bovine RF122 / ET3-1).